We begin with the raw amino-acid sequence, 273 residues long: Undecaprenyl-diphosphatase (273 aa).

7 helical membrane passes run 13-35, 45-62, 82-102, 108-128, 186-206, 219-239, and 250-270; these read GLVE…VFGN, VFEI…VFEY, FVLN…LFDK, LFNP…ILWV, TEFS…YDVL, LILI…KALL, and FAYY…SGWI.

This sequence belongs to the UppP family.

The protein resides in the cell inner membrane. The enzyme catalyses di-trans,octa-cis-undecaprenyl diphosphate + H2O = di-trans,octa-cis-undecaprenyl phosphate + phosphate + H(+). Its function is as follows. Catalyzes the dephosphorylation of undecaprenyl diphosphate (UPP). Confers resistance to bacitracin. The chain is Undecaprenyl-diphosphatase from Neisseria gonorrhoeae (strain ATCC 700825 / FA 1090).